Consider the following 152-residue polypeptide: Superoxide dismutase [Cu-Zn] (152 aa).

Ser-2 bears the N-acetylserine mark. 3 residues coordinate Cu cation: His-44, His-46, and His-61. A disulfide bridge connects residues Cys-55 and Cys-144. Positions 61, 69, 78, and 81 each coordinate Zn(2+). His-118 serves as a coordination point for Cu cation.

Belongs to the Cu-Zn superoxide dismutase family. As to quaternary structure, monomer. Cu cation is required as a cofactor. Zn(2+) serves as cofactor.

The protein localises to the cytoplasm. It carries out the reaction 2 superoxide + 2 H(+) = H2O2 + O2. Its activity is regulated as follows. Inhibited by KCN and diethyldithiocarbamate. Destroys radicals which are normally produced within the cells and which are toxic to biological systems. The plasma superoxide dismutase has phagocytosis-stimulating activity and may play an important role in the biological defenses of the organism. The sequence is that of Superoxide dismutase [Cu-Zn] from Halocynthia roretzi (Sea squirt).